Consider the following 155-residue polypeptide: Large ribosomal subunit protein uL13 (155 aa).

Belongs to the universal ribosomal protein uL13 family. Part of the 50S ribosomal subunit.

In terms of biological role, this protein is one of the early assembly proteins of the 50S ribosomal subunit, although it is not seen to bind rRNA by itself. It is important during the early stages of 50S assembly. This chain is Large ribosomal subunit protein uL13, found in Rickettsia typhi (strain ATCC VR-144 / Wilmington).